The sequence spans 591 residues: MVTVVENIDPKIKPVPAVIKELEEKYAGKFVVQHTVDEIPTVWVARADLLDVLLFLRKLPKPYVMLFDLSAIDERLRQHRQGLPESDFTVFYHLMSLERNSDVRIKVALSEEDLNVPSATQIWPNANWYEREVWDMFGIVFTGHPHLTRILLPKYWEGHPLRKEYHARATEFTPYFLNTAKQQYEQENLRFVPEEWGMKRSGRDEDFMFLNIGPNHPSAHGAFRLVLQLDGEEVVDCIPDIGYHHRGAEKMAERQTWHSFIPYTDRIDYLGGVMNELPYIMSVEKLAGITIPPRAETIRVMMSEFFRITNNLLFVGTFIQDAGGMTPVFYMFTDRQKAYDVIEAVTGYRMHPAWFRIGGTAHDLPRGWQRLVREFLDWMPKRLDEYVKAALQNSVLKGRTQGVAQYNTKQALAWGVTGAGLRATGLDFDLRKARPYMGYENYDFEVPVGYNGDAYDRCMVKVEEMRQSLRIIRQCMDNMPQGPYKADHPLAVPPPKDRTLNDIETLINHFISVSWGPVMPAGECTTIVEATKGLNSYYITSDKATMSYRTRIRTPTFAHLQQMPSVINGSLVSDAIMYLASIDVVMADCDR.

The tract at residues 1 to 182 (MVTVVENIDP…TPYFLNTAKQ (182 aa)) is NADH dehydrogenase I subunit C. An NADH dehydrogenase I subunit D region spans residues 206-591 (DFMFLNIGPN…IDVVMADCDR (386 aa)).

In the N-terminal section; belongs to the complex I 30 kDa subunit family. It in the C-terminal section; belongs to the complex I 49 kDa subunit family. NDH-1 is composed of 13 different subunits. Subunits NuoB, CD, E, F, and G constitute the peripheral sector of the complex.

It is found in the cell inner membrane. It catalyses the reaction a quinone + NADH + 5 H(+)(in) = a quinol + NAD(+) + 4 H(+)(out). In terms of biological role, NDH-1 shuttles electrons from NADH, via FMN and iron-sulfur (Fe-S) centers, to quinones in the respiratory chain. The immediate electron acceptor for the enzyme in this species is believed to be ubiquinone. Couples the redox reaction to proton translocation (for every two electrons transferred, four hydrogen ions are translocated across the cytoplasmic membrane), and thus conserves the redox energy in a proton gradient. This is NADH-quinone oxidoreductase subunit C/D from Psychrobacter arcticus (strain DSM 17307 / VKM B-2377 / 273-4).